Reading from the N-terminus, the 557-residue chain is Probable protein kinase UbiB (557 aa).

The Protein kinase domain occupies 121–509; it reads AFDTTPLASA…RKLQTRVVTA (389 aa). ATP-binding positions include 127–135 and Lys-154; that span reads LASASIAQV. Asp-289 functions as the Proton acceptor in the catalytic mechanism. The next 2 membrane-spanning stretches (helical) occupy residues 506–526 and 535–555; these read VVTAITGSGLLVVAAVLYGLH and VPVWSWISGGAGSAALLIAWL.

This sequence belongs to the ABC1 family. UbiB subfamily.

The protein localises to the cell inner membrane. It functions in the pathway cofactor biosynthesis; ubiquinone biosynthesis [regulation]. Is probably a protein kinase regulator of UbiI activity which is involved in aerobic coenzyme Q (ubiquinone) biosynthesis. The polypeptide is Probable protein kinase UbiB (Xanthomonas campestris pv. campestris (strain 8004)).